The chain runs to 131 residues: Sperm microtubule inner protein 11 (131 aa).

The disordered stretch occupies residues 17–44 (SKKRDKTEETNQKDPVPTRLPPIFSEDG).

As to quaternary structure, microtubule inner protein component of sperm flagellar doublet microtubules. As to expression, expressed in sperm.

Its subcellular location is the cytoplasm. It localises to the cytoskeleton. The protein resides in the flagellum axoneme. In terms of biological role, microtubule inner protein (MIP) part of the dynein-decorated doublet microtubules (DMTs) in flagellum axoneme. May serve to reinforce and thus stabilize the microtubule structure in the sperm flagella. In Bos taurus (Bovine), this protein is Sperm microtubule inner protein 11 (SPMIP11).